The sequence spans 378 residues: Cytochrome b (378 aa).

The next 4 membrane-spanning stretches (helical) occupy residues 34–54, 78–99, 114–134, and 179–199; these read FGSLLGLCLIIQILTGLFLAM, WLLRTLHANGASFFFICIYLHV, WLIGVIILFLVMGTAFMGYVL, and FFTFHFILPFIVLAMTMIHLL. 2 residues coordinate heme b: histidine 84 and histidine 98. 2 residues coordinate heme b: histidine 183 and histidine 197. Residue histidine 202 coordinates a ubiquinone. 4 consecutive transmembrane segments (helical) span residues 227–247, 289–309, 321–341, and 348–368; these read FKDIVGFIVMIFILISLVLIS, LGGVIALVLSIAILMILPFYN, INQVMFWSMLVTVILLTWIGA, and YVLIGQILTVVYFLYYLVNPL.

It belongs to the cytochrome b family. As to quaternary structure, the main subunits of complex b-c1 are: cytochrome b, cytochrome c1 and the Rieske protein. Requires heme b as cofactor.

Its subcellular location is the mitochondrion inner membrane. Its function is as follows. Component of the ubiquinol-cytochrome c reductase complex (complex III or cytochrome b-c1 complex) that is part of the mitochondrial respiratory chain. The b-c1 complex mediates electron transfer from ubiquinol to cytochrome c. Contributes to the generation of a proton gradient across the mitochondrial membrane that is then used for ATP synthesis. The polypeptide is Cytochrome b (mt:Cyt-b) (Drosophila melanogaster (Fruit fly)).